We begin with the raw amino-acid sequence, 102 residues long: Circadian clock oscillator protein KaiB (102 aa).

It belongs to the KaiB family. Undergoes a major conformational rearrangment; in the free state forms homotetramers with 2 dimers. When bound to the CI domain of KaiC switches to a monomeric thioredoxin-fold (KaiB(fs)). Monomers, homodimers and homotetramers are detected in solution; at low concentrations only monomers are seen. In vitro forms KaiC(6):KaiB(1) and KaiC(6):KaiB(6) complexes. Only associates with 'Ser-431'-phosphorylated KaiC (and not with doubly phosphorylated KaiC). Complex formation between KaiB and KaiC is regulated by the phosphorylation state of KaiC and by an ATP hydrolysis-driven conformation change in the CI ring of KaiC; complex formation is slow. Slow complex formation is crucial for the timing of the circadian period. In low resolution cryo-EM forms a KaiC(6):KaiB(6) complex. The KaiABC complex composition changes during the circadian cycle to control KaiC phosphorylation. Complexes KaiC(6), KaiA(2-4):KaiC(6), KaiB(6):KaiC(6) and KaiC(6):KaiB(6):KaiA(12) are among the most important forms, many form cooperatively. The KaiB:KaiC complex is more prevalent at 16 hours (in the dark) than at 4 hours (in the light) in the circadian cycle. The KaiA:KaiB complex is only found at 20-24 hours in the circadian cycle (subjective night). Binds to the CI domain of KaiC; SasA and KaiB compete to bind to the CI domain.

It is found in the cytoplasm. The protein resides in the cell membrane. Functionally, key component of the KaiABC oscillator complex, which constitutes the main circadian regulator in cyanobacteria. Complex composition changes during the circadian cycle to control KaiC phosphorylation. KaiA stimulates KaiC autophosphorylation, while KaiB sequesters KaiA, leading to KaiC autodephosphorylation. KaiA binding to the KaiC CII domain yields KaiA(2-4):KaiC(6) complexes which stimulate KaiC autophosphorylation. Phospho-Ser-431 KaiC accumulation triggers binding of KaiB to form the KaiB(6):KaiC(6) complex, leading to changes in the output regulators CikA and SasA. KaiB switches to a thioredoxin-like fold (KaiB(fs)) in complex with KaiC. KaiB(6):KaiC(6) formation exposes a site for KaiA binding that sequesters KaiA from the CII domain, making the KaiC(6):KaiB(6):KaiA(12) complex that results in KaiC autodephosphorylation. Complete dephosphorylation of KaiC leads to dissociation of KaiA(2):KaiB(1), completing 1 cycle of the Kai oscillator. Its function is as follows. Circadian oscillations can be generated in vitro by incubating KaiA, KaiB and KaiC with 1 mM ATP. The cycle is self-sustainable for at least 3 cycles and resistant to temperature changes. A very robust clock is reconstituted with KaiA, KaiB, KaiC, SasA, CikA and RpaA; output is measured by transcription from an appropriate reporter. In terms of biological role, a metamorphic protein which reversibly switches between an inactive tetrameric fold and a rare, thioredoxin-like monomeric fold (KaiB(fs)). KaiB(fs) binds phospho-KaiC, KaiA and CikA. KaiA and CikA compete for binding to KaiB(fs), and KaiB(fs) and SasA compete for binding to KaiC, thus the clock oscillator and output signal pathway are tightly coupled. In Synechococcus elongatus (strain ATCC 33912 / PCC 7942 / FACHB-805) (Anacystis nidulans R2), this protein is Circadian clock oscillator protein KaiB.